The chain runs to 249 residues: Chitooligosaccharide deacetylase (249 aa).

Positions 61 and 125 each coordinate Mg(2+).

The protein belongs to the YdjC deacetylase family. ChbG subfamily. In terms of assembly, homodimer. Mg(2+) is required as a cofactor.

The protein localises to the cytoplasm. It catalyses the reaction N,N'-diacetylchitobiose + H2O = N-acetyl-beta-D-glucosaminyl-(1-&gt;4)-D-glucosamine + acetate. It carries out the reaction diacetylchitobiose-6'-phosphate + H2O = N'-monoacetylchitobiose-6'-phosphate + acetate. Its pathway is glycan degradation; chitin degradation. Functionally, involved in the degradation of chitin. ChbG is essential for growth on the acetylated chitooligosaccharides chitobiose and chitotriose but is dispensable for growth on cellobiose and chitosan dimer, the deacetylated form of chitobiose. Deacetylation of chitobiose-6-P and chitotriose-6-P is necessary for both the activation of the chb promoter by the regulatory protein ChbR and the hydrolysis of phosphorylated beta-glucosides by the phospho-beta-glucosidase ChbF. Catalyzes the removal of only one acetyl group from chitobiose-6-P to yield monoacetylchitobiose-6-P, the inducer of ChbR and the substrate of ChbF. This is Chitooligosaccharide deacetylase from Escherichia coli O7:K1 (strain IAI39 / ExPEC).